Consider the following 880-residue polypeptide: Xylosyltransferase oxt (880 aa).

The Cytoplasmic segment spans residues 1–14; that stretch reads MEQSVSARWLRRYR. Residues 15-35 form a helical; Signal-anchor for type II membrane protein membrane-spanning segment; sequence PVLIILVLIFGIQLFLAYKSV. Residues 36-880 are Lumenal-facing; that stretch reads DIGGGSGSGL…PKSDVDALLK (845 aa). 4 disulfides stabilise this stretch: C87/C115, C131/C469, C488/C501, and C490/C499. N135 and N139 each carry an N-linked (GlcNAc...) asparagine glycan. In terms of domain architecture, WSC spans 138 to 232; that stretch reads ANVSLGCYRD…FYAMNIYETG (95 aa). UDP-alpha-D-xylose is bound by residues D287 and 316–318; that span reads TIW. N-linked (GlcNAc...) asparagine glycosylation occurs at N346. A UDP-alpha-D-xylose-binding site is contributed by 419-420; it reads DW. Residues S502 and 526-527 contribute to the UDP-alpha-D-xylose site; that span reads RK. N-linked (GlcNAc...) asparagine glycosylation is found at N700 and N729. The cysteines at positions 846 and 859 are disulfide-linked.

The protein belongs to the glycosyltransferase 14 family. XylT subfamily. The cofactor is Ca(2+). Mn(2+) serves as cofactor. Mg(2+) is required as a cofactor.

Its subcellular location is the endoplasmic reticulum membrane. It is found in the golgi apparatus membrane. It catalyses the reaction UDP-alpha-D-xylose + L-seryl-[protein] = 3-O-(beta-D-xylosyl)-L-seryl-[protein] + UDP + H(+). The protein operates within glycan metabolism; chondroitin sulfate biosynthesis. It functions in the pathway glycan metabolism; heparan sulfate biosynthesis. Catalyzes the first step in biosynthesis of glycosaminoglycan. Transfers D-xylose from UDP-D-xylose to specific serine residues of the core protein. In Drosophila pseudoobscura pseudoobscura (Fruit fly), this protein is Xylosyltransferase oxt.